Reading from the N-terminus, the 452-residue chain is 1,3-beta-glucanosyltransferase gel1 (452 aa).

The first 19 residues, 1-19, serve as a signal peptide directing secretion; the sequence is MKASAVTAALAVGASTVLA. Cys71 and Cys100 form a disulfide bridge. 5 residues coordinate (1,3-beta-D-glucosyl)n: Tyr89, Asn159, Glu160, Asp201, and Arg206. The Proton donor role is filled by Glu160. 2 cysteine pairs are disulfide-bonded: Cys215–Cys345 and Cys233–Cys264. The N-linked (GlcNAc...) asparagine glycan is linked to Asn249. Glu261 serves as the catalytic Nucleophile. Tyr292 is a (1,3-beta-D-glucosyl)n binding site. Residues 325–340 show a composition bias toward polar residues; the sequence is EKTSNPSGDGNYNKTG. Positions 325 to 419 are disordered; sequence EKTSNPSGDG…SGTSTSSKGA (95 aa). An N-linked (GlcNAc...) asparagine glycan is attached at Asn337. Positions 393–419 are enriched in low complexity; it reads STATAEPGSGSATGSSSSGTSTSSKGA. Ala419 carries the GPI-like-anchor amidated alanine lipid modification. The propeptide at 420–452 is removed in mature form; sequence AAGLTVPSLTMAPVVVGAVTLLSTVFGAGLVLL.

This sequence belongs to the glycosyl hydrolase 72 family. Post-translationally, the GPI-like anchor contains a phosphoceramide lipid group.

It is found in the cell membrane. Functionally, splits internally a 1,3-beta-glucan molecule and transfers the newly generated reducing end (the donor) to the non-reducing end of another 1,3-beta-glucan molecule (the acceptor) forming a 1,3-beta linkage, resulting in the elongation of 1,3-beta-glucan chains in the cell wall. Involved in cell wall morphogenesis. In Aspergillus fumigatus (strain ATCC MYA-4609 / CBS 101355 / FGSC A1100 / Af293) (Neosartorya fumigata), this protein is 1,3-beta-glucanosyltransferase gel1 (gel1).